A 356-amino-acid chain; its full sequence is Cytochrome c oxidase subunit 2 (356 aa).

An N-terminal signal peptide occupies residues 1-20 (MVKHWRLILLLALVPLLLSG). Cysteine 21 is lipidated: N-palmitoyl cysteine. A lipid anchor (S-diacylglycerol cysteine) is attached at cysteine 21. Residues 21–47 (CGKPFLSTLKPAGEVADKQYDLTVLST) lie on the Extracellular side of the membrane. Residues 21–257 (CGKPFLSTLK…KNYKSTAESD (237 aa)) are cytochrome c oxidase subunit II. A helical membrane pass occupies residues 48-66 (LIMVVVVAVVSVIFFYVIV). The Cytoplasmic segment spans residues 67–87 (RFRRSRVGENTIPKQVEGNKF). A helical transmembrane segment spans residues 88–106 (LEITWTVIPILLLIILVIP). The Extracellular portion of the chain corresponds to 107–356 (VVLYTLELAD…YLKGLKAESK (250 aa)). Residues histidine 176, cysteine 217, cysteine 221, and histidine 225 each contribute to the Cu cation site. One can recognise a Cytochrome c domain in the interval 258–356 (LAKQGEELFK…YLKGLKAESK (99 aa)). Cysteine 271, cysteine 274, histidine 275, and methionine 329 together coordinate heme c.

It belongs to the cytochrome c oxidase subunit 2 family. Cu cation is required as a cofactor. Heme c serves as cofactor.

The protein localises to the cell membrane. The catalysed reaction is 4 Fe(II)-[cytochrome c] + O2 + 8 H(+)(in) = 4 Fe(III)-[cytochrome c] + 2 H2O + 4 H(+)(out). In terms of biological role, subunits I and II form the functional core of the enzyme complex. Electrons originating in cytochrome c are transferred via heme a and Cu(A) to the binuclear center formed by heme a3 and Cu(B). This is Cytochrome c oxidase subunit 2 (ctaC) from Bacillus subtilis (strain 168).